Consider the following 316-residue polypeptide: L-lactate dehydrogenase (316 aa).

Residues V15, D37, K42, Y68, and 82–83 contribute to the NAD(+) site; that span reads GL. Substrate-binding positions include Q85, R91, and 123 to 126; that span reads NPVD. Residues 121–123 and T146 contribute to the NAD(+) site; that span reads ASN. Position 151 to 154 (151 to 154) interacts with substrate; sequence DTSR. R156 and H171 together coordinate beta-D-fructose 1,6-bisphosphate. H178 serves as the catalytic Proton acceptor. Y222 is modified (phosphotyrosine). Substrate is bound at residue T231.

Belongs to the LDH/MDH superfamily. LDH family. As to quaternary structure, homotetramer.

The protein resides in the cytoplasm. It catalyses the reaction (S)-lactate + NAD(+) = pyruvate + NADH + H(+). It functions in the pathway fermentation; pyruvate fermentation to lactate; (S)-lactate from pyruvate: step 1/1. Allosterically activated by fructose 1,6-bisphosphate (FBP). Catalyzes the conversion of lactate to pyruvate. This chain is L-lactate dehydrogenase, found in Borreliella burgdorferi (strain ATCC 35210 / DSM 4680 / CIP 102532 / B31) (Borrelia burgdorferi).